The primary structure comprises 981 residues: GPI ethanolamine phosphate transferase 1 (981 aa).

Residues 1-6 (MAGSSR) are Cytoplasmic-facing. A helical membrane pass occupies residues 7-27 (IGFMAIAVAFHLVYILSIFDI). Over 28-464 (YFVSPIVTGM…LQTYDWLFLR (437 aa)) the chain is Lumenal. 3 N-linked (GlcNAc...) asparagine glycosylation sites follow: Asn-148, Asn-211, and Asn-295. The chain crosses the membrane as a helical span at residues 465-485 (ALITIGYLGWMAYATTTVLSL). The Cytoplasmic segment spans residues 486–496 (YVVKESMSPQR). Residues 497–517 (TLLGSAFFLSLLVALYSSFII) form a helical membrane-spanning segment. The Lumenal portion of the chain corresponds to 518 to 519 (SK). Residues 520-540 (SPPAYYLYAFFPVLFWEEVYA) form a helical membrane-spanning segment. The Cytoplasmic portion of the chain corresponds to 541 to 560 (RRANVAKGFQALFGHVKSGG). A helical membrane pass occupies residues 561–581 (AVVALVFNVVLYLGVIQSLAL). At 582-587 (AYIHRE) the chain is on the lumenal side. A helical transmembrane segment spans residues 588–608 (ILTGLFVLGAFWPMTQGISFL). The Cytoplasmic segment spans residues 609–611 (RSH). Residues 612–632 (LFLSMLWFFSCLAMSTFTLLP) traverse the membrane as a helical segment. Over 633–638 (AMKVED) the chain is Lumenal. Residues 639 to 659 (IPLIMAGGGLMTFVGLAYLVL) traverse the membrane as a helical segment. At 660–681 (EDFILSDVSSSKTKLKRLHTSR) the chain is on the cytoplasmic side. The chain crosses the membrane as a helical span at residues 682–702 (TLLGIQVGLIILAMLVTHSSA). At 703–708 (TSLQAK) the chain is on the lumenal side. Residues 709–729 (LGLPKGNQIVGWFVLVTSLLM) form a helical membrane-spanning segment. Topologically, residues 730–744 (PLAYRLQPNSHYMHR) are cytoplasmic. Residues 745 to 767 (LAIIFLTCAPTFVILTISYEGLF) traverse the membrane as a helical segment. At 768 to 819 (YVAFSITLLSWVRLEYAVDAFTQEKAKKQATVAGSQQHTPSTFRPLSLSDAR) the chain is on the lumenal side. Residues 820–840 (IALFFMVLLQSAFFSTGNIAS) traverse the membrane as a helical segment. Over 841 to 862 (ISSFSLESVSRLIPVFDPFSQG) the chain is Cytoplasmic. A helical membrane pass occupies residues 863–883 (ALLILKIIIPFFLISANLGVL). The Lumenal segment spans residues 884-892 (NKRLGVAPS). The helical transmembrane segment at 893 to 913 (AIFMVVLTASDVLTLYFFWVV) threads the bilayer. The Cytoplasmic segment spans residues 914-929 (KDEGSWLEIGSTITHF). Residues 930–950 (AIASFLCVFVAALEFVSAAFI) traverse the membrane as a helical segment. The Lumenal portion of the chain corresponds to 951–981 (AGIEVEDTKSAALTSASTKADEKVPPVAGAE).

The protein belongs to the PIGG/PIGN/PIGO family. PIGN subfamily.

It is found in the endoplasmic reticulum membrane. The protein operates within glycolipid biosynthesis; glycosylphosphatidylinositol-anchor biosynthesis. Its function is as follows. Ethanolamine phosphate transferase involved in glycosylphosphatidylinositol-anchor biosynthesis. Transfers ethanolamine phosphate to the first alpha-1,4-linked mannose of the glycosylphosphatidylinositol precursor of GPI-anchor. The polypeptide is GPI ethanolamine phosphate transferase 1 (MCD4) (Gibberella zeae (strain ATCC MYA-4620 / CBS 123657 / FGSC 9075 / NRRL 31084 / PH-1) (Wheat head blight fungus)).